The sequence spans 448 residues: Trigger factor (448 aa).

The PPIase FKBP-type domain maps to 172–257 (GDRVTVDFVG…MKKIEWPHLP (86 aa)).

Belongs to the FKBP-type PPIase family. Tig subfamily.

It localises to the cytoplasm. It carries out the reaction [protein]-peptidylproline (omega=180) = [protein]-peptidylproline (omega=0). Its function is as follows. Involved in protein export. Acts as a chaperone by maintaining the newly synthesized protein in an open conformation. Functions as a peptidyl-prolyl cis-trans isomerase. This chain is Trigger factor, found in Burkholderia orbicola (strain MC0-3).